The primary structure comprises 491 residues: CRM-domain containing factor CFM9, mitochondrial (491 aa).

A mitochondrion-targeting transit peptide spans 1–25; that stretch reads MNQVFKGWSRGMSTSRGRSMRSKVE. The tract at residues 1-34 is disordered; it reads MNQVFKGWSRGMSTSRGRSMRSKVESRMRKESGK. Over residues 22-34 the composition is skewed to basic and acidic residues; sequence SKVESRMRKESGK. The region spanning 90–187 is the CRM domain; it reads ELFTSEQVQA…RNYRQPKNLI (98 aa). Over residues 255-265 the composition is skewed to basic and acidic residues; the sequence is PYVFHGDKQSE. Disordered stretches follow at residues 255 to 287 and 328 to 491; these read PYVF…DQEE and RSRT…WDSD. Acidic residues predominate over residues 277 to 287; the sequence is EPGDEDSDQEE. The span at 345–359 shows a compositional bias: basic and acidic residues; it reads RRNDRDTHSQRRPND. Residues 360 to 375 are compositionally biased toward acidic residues; the sequence is SDDDDDDGELDSEDDE. Residues 392–416 show a composition bias toward basic and acidic residues; that stretch reads RPREDFKRRSPDPRPRPRAQVRSDD. Residues 453–478 show a composition bias toward polar residues; that stretch reads TVSASSSKQSRFRNNSSRDGINNSKS.

As to expression, highly expressed in roots and meristemic regions of young seedlings. Expressed at low levels in stems, trichomes and stigma.

The protein resides in the mitochondrion. In terms of biological role, involved in the splicing of group II introns in mitochondria. Required for the splicing of mitochondrial introns found in nad1, nad2, nad4, nad5, nad7, rps3 and cox2 genes. Splicing of mitochondrial introns is crucial for mitochondrial biogenesis and function, plant growth and development, and plant response to abiotic stresses. This is CRM-domain containing factor CFM9, mitochondrial from Arabidopsis thaliana (Mouse-ear cress).